The chain runs to 131 residues: Small ribosomal subunit protein uS8 (131 aa).

It belongs to the universal ribosomal protein uS8 family. Part of the 30S ribosomal subunit. Contacts proteins S5 and S12.

Functionally, one of the primary rRNA binding proteins, it binds directly to 16S rRNA central domain where it helps coordinate assembly of the platform of the 30S subunit. The protein is Small ribosomal subunit protein uS8 of Paraburkholderia phymatum (strain DSM 17167 / CIP 108236 / LMG 21445 / STM815) (Burkholderia phymatum).